The sequence spans 253 residues: MGGSESTGRKVSFGMDEEERVRVLRGVRLSDEVVNRMKDSDLPSKDQSTSAASGTASAPAAFPSKAGPSASHPASTSTGGAHKPTAAGVGQQYAEEDLYRRYEREQAIIQEELARLAKRERESAHEKLSASILLEKNSTNQERRKAEHLAKELEQKEAELQRLNTFYREQLSSIEKKNLEIYRLTAEQYHTAATNAELRVRQRSYDPVCMNLQADILKCYSENKQERLNCSNLAKEYRKCVSAAQKNLLFNHG.

Residues Met-1 to Val-89 are disordered. Residue Gly-2 is the site of N-myristoyl glycine attachment. Over residues Arg-28 to Ser-44 the composition is skewed to basic and acidic residues. The segment covering Ser-48 to Ser-64 has biased composition (low complexity). Residues Ala-94–Asn-178 adopt a coiled-coil conformation. One can recognise a CHCH domain in the interval Asp-206 to Leu-248. 2 short sequence motifs (cx9C motif) span residues Cys-209–Cys-219 and Cys-230–Cys-240. 2 disulfide bridges follow: Cys-209-Cys-240 and Cys-219-Cys-230.

The protein belongs to the MICOS complex subunit Mic19 family. Metazoan Mic25 subfamily. Component of the mitochondrial contact site and cristae organizing system (MICOS) complex (also known as MINOS or MitOS complex).

Its subcellular location is the mitochondrion inner membrane. Component of the MICOS complex, a large protein complex of the mitochondrial inner membrane that plays crucial roles in the maintenance of crista junctions, inner membrane architecture, and formation of contact sites to the outer membrane. The sequence is that of MICOS complex subunit mic25 (chchd6) from Xenopus tropicalis (Western clawed frog).